We begin with the raw amino-acid sequence, 451 residues long: Lysine histidine transporter-like 3 (451 aa).

The Cytoplasmic portion of the chain corresponds to 1 to 40; the sequence is MKGIPSSSNQILNQDLVEDQSFELEDWLPITASRNANWYY. A helical transmembrane segment spans residues 41–61; sequence SAFHNVTAIVGAGVLGLPYAM. Topologically, residues 62–63 are extracellular; sequence SE. A helical membrane pass occupies residues 64 to 84; it reads LGWGPGVVVLILSWVITLYTF. The Cytoplasmic segment spans residues 85 to 115; sequence WQMIEMHEMFEGKRFDRYHELGQAAFGKKLG. The helical transmembrane segment at 116-136 threads the bilayer; that stretch reads LYIVVPLQLLVETSACIVYMV. The Extracellular segment spans residues 137–159; the sequence is TGGESLKKIHQLSVGDYECRKLK. The helical transmembrane segment at 160 to 177 threads the bilayer; the sequence is VRHFILIFASSQFVLSLL. At 178 to 182 the chain is on the cytoplasmic side; it reads KNFNS. The helical transmembrane segment at 183–203 threads the bilayer; that stretch reads ISGVSLVAAVMSMSYSTIAWV. Residues 204–227 lie on the Extracellular side of the membrane; that stretch reads ASLTKGVANNVEYGYKRRNNTSVP. The chain crosses the membrane as a helical span at residues 228-248; sequence LAFLGALGEMAFAYAGHNVVL. Residues 249-269 lie on the Cytoplasmic side of the membrane; sequence EIQATIPSTPENPSKRPMWKG. A helical membrane pass occupies residues 270–290; sequence AIVAYIIVAFCYFPVALVGFW. The Extracellular portion of the chain corresponds to 291 to 309; it reads TFGNNVEENILKTLRGPKG. Residues 310–330 form a helical membrane-spanning segment; that stretch reads LIIVANIFVIIHLMGSYQVYA. Over 331-358 the chain is Cytoplasmic; the sequence is MPVFDMIESVMIKKWHFSPTRVLRFTIR. Residues 359-379 traverse the membrane as a helical segment; it reads WTFVAATMGIAVALPHFSALL. Ser-380 is a topological domain (extracellular). The helical transmembrane segment at 381 to 401 threads the bilayer; sequence FFGGFIFAPTTYFIPCIIWLI. At 402–413 the chain is on the cytoplasmic side; that stretch reads LKKPKRFSLSWC. Residues 414-434 form a helical membrane-spanning segment; sequence INWICIILGVLVMIIAPIGGL. The Extracellular segment spans residues 435 to 451; it reads AKLMNALKQPDSSCKST.

Belongs to the amino acid/polyamine transporter 2 family. Amino acid/auxin permease (AAAP) (TC 2.A.18.2) subfamily.

Its subcellular location is the cell membrane. In terms of biological role, amino acid transporter. The sequence is that of Lysine histidine transporter-like 3 from Arabidopsis thaliana (Mouse-ear cress).